The sequence spans 292 residues: MKLIDTLLKLGNDVHINEKMKCHVSFKIGGPVRLFIIPYTVDMFLETLNVLDNVKILGNGTNVLPKDEYMDFNVISTEKLTGIFVENDTIICESGLSLKKLCLYAAKEGFSGFENAYGIPGSVGGAAYMNAGAFGWETAEMIEFVDVYDGKKVLRLDRTEMKFSYRNSIFKENEDLIILRVGFRIIKGDSYNIFSRMKQVMIKRVEKQPLEFPSAGSVFKRPRKGFYVGSAIEKIGLKGFRIGGAMISEKHAGFIINYNNAKSSDVKDMIELVKDKIYKNFGVKLETEIEIW.

In terms of domain architecture, FAD-binding PCMH-type spans 27–188 (KIGGPVRLFI…LRVGFRIIKG (162 aa)). The active site involves Arg-166. Ser-217 serves as the catalytic Proton donor. Glu-288 is a catalytic residue.

The protein belongs to the MurB family. Requires FAD as cofactor.

The protein resides in the cytoplasm. It carries out the reaction UDP-N-acetyl-alpha-D-muramate + NADP(+) = UDP-N-acetyl-3-O-(1-carboxyvinyl)-alpha-D-glucosamine + NADPH + H(+). It functions in the pathway cell wall biogenesis; peptidoglycan biosynthesis. Functionally, cell wall formation. This Thermosipho melanesiensis (strain DSM 12029 / CIP 104789 / BI429) protein is UDP-N-acetylenolpyruvoylglucosamine reductase.